The sequence spans 421 residues: MLYPEYPEYDNFNESGALIKVVGVGGGGGNAVNHMVMNMVKQEMGGTFVGESSLTSEEHGRIVFYAVNTDAQALRKSQVQQTVQIGGETTKGLGAGANPNIGRKAAEDDQDEIRKMLEGADMVFIAAGMGGGTGTGAAPVVAKIAKELGILTVAVVTKPFTFEGKKRMQFAELGIKDLSQYVDSMIIIPNQQIQKVLPKNAKLIDAFAAANDVLRNSVMGISDMITSPGLINVDFADVRTVMSVQGQAMIGFGSAVGEPGAGRAEEAARLAVRNDLLEKIDLSNAQGILVNITAGMDLVFEEFNIIGETIGSFASEEATVVVGTSLVPEMSDEIRVTIVATGLGEIAGNEPIQVVRQGLSTQNIEGEGRVNIVPELHRRESVEVSRTASEEYQRPLDKPITDRLEAFKKNNFFNPAQREEN.

GTP is bound by residues 26 to 30 (GGGGN), 132 to 134 (GTG), E163, R167, and N211.

The protein belongs to the FtsZ family. Homodimer. Polymerizes to form a dynamic ring structure in a strictly GTP-dependent manner. Interacts directly with several other division proteins.

Its subcellular location is the cytoplasm. Functionally, essential cell division protein that forms a contractile ring structure (Z ring) at the future cell division site. The regulation of the ring assembly controls the timing and the location of cell division. One of the functions of the FtsZ ring is to recruit other cell division proteins to the septum to produce a new cell wall between the dividing cells. Binds GTP and shows GTPase activity. This is Cell division protein FtsZ from Haemophilus influenzae (strain ATCC 51907 / DSM 11121 / KW20 / Rd).